We begin with the raw amino-acid sequence, 473 residues long: H(+)/Cl(-) exchange transporter ClcA (473 aa).

At 1 to 32 (MKTDTPSLETPQAARLRRRQLIRQLLERDKTP) the chain is on the cytoplasmic side. The helical transmembrane segment at 33–69 (LAILFMAAVVGTLVGLAAVAFDKGVAWLQNQRMGALV) threads the bilayer. At 70–76 (HTADNYP) the chain is on the periplasmic side. Residues 77–100 (LLLTVAFLCSAVLAMFGYFLVRKY) traverse the membrane as a helical segment. The Selectivity filter part_1 signature appears at 106–110 (GSGIP). Ser107 provides a ligand contact to chloride. The helical intramembrane region spans 109–116 (IPEIEGAL). Residues 117-123 (EDQRPVR) are Cytoplasmic-facing. 2 helical membrane passes run 124–141 (WWRV…TLGG) and 148–166 (EGPT…LDVF). The Selectivity filter part_2 motif lies at 146-150 (GREGP). At 167–176 (RLKGDEARHT) the chain is on the cytoplasmic side. 2 consecutive intramembrane regions (helical) follow at residues 177 to 189 (LLAT…LAAA) and 193 to 201 (PLAGILFII). Residues 202–214 (EEMRPQFRYTLIS) lie on the Cytoplasmic side of the membrane. A helical transmembrane segment spans residues 215 to 232 (IKAVFIGVIMSTIMYRIF). Topologically, residues 233-252 (NHEVALIDVGKLSDAPLNTL) are periplasmic. The chain crosses the membrane as a helical span at residues 253–281 (WLYLILGIIFGIFGPIFNKWVLGMQDLLH). The Cytoplasmic segment spans residues 282-287 (RVHGGN). Residues 288-309 (ITKWVLMGGAIGGLCGLLGFVA) traverse the membrane as a helical segment. Topologically, residues 310-329 (PATSGGGFNLIPIATAGNFS) are periplasmic. The next 2 membrane-spanning stretches (helical) occupy residues 330–349 (MGML…LCFS) and 355–376 (GIFA…MVAV). Positions 355 to 359 (GIFAP) match the Selectivity filter part_3 motif. Chloride-binding residues include Ile356 and Phe357. The Periplasmic segment spans residues 377–386 (ELFPQYHLEA). Positions 387-401 (GTFAIAGMGALLAAS) form an intramembrane region, helical. The segment at residues 402-404 (IRA) is an intramembrane region (note=Loop between two helices). Residues 405 to 416 (PLTGIILVLEMT) constitute an intramembrane region (helical). An intramembrane region (note=Loop between two helices) is located at residues 417 to 421 (DNYQL). Residues 422–438 (ILPMIITGLGATLLAQF) traverse the membrane as a helical segment. Residues 439–473 (TGGKPLYSAILARTLAKQEAEQLARSKAASARENT) lie on the Cytoplasmic side of the membrane. A chloride-binding site is contributed by Tyr445.

This sequence belongs to the chloride channel (TC 2.A.49) family. ClcA subfamily. As to quaternary structure, homodimer.

It localises to the cell inner membrane. The enzyme catalyses 2 chloride(in) + H(+)(out) = 2 chloride(out) + H(+)(in). In terms of biological role, proton-coupled chloride transporter. Functions as antiport system and exchanges two chloride ions for 1 proton. Probably acts as an electrical shunt for an outwardly-directed proton pump that is linked to amino acid decarboxylation, as part of the extreme acid resistance (XAR) response. This chain is H(+)/Cl(-) exchange transporter ClcA, found in Escherichia coli O45:K1 (strain S88 / ExPEC).